Consider the following 568-residue polypeptide: MDQDAFILKEDSEVEREAPGGRESLSDVIGFLDAVLSSEPTDIGGDRSWLHNTINTPQGPGSAHRAKSEGEGEVSTPSTQDNRSGEESRVSGRTSKPEAEAHAGNLDKQNIHRAFGGRTGTNSVSQDLGDGGDSGILENPPNERGYPRSGIEDENREMAAHPDKRGEDQAEGLPEEVRGSTSLPDEGEGGASNNGRSMEPGSSHSARVTGVLVIPSPELEEAVLRRNKRRPTNSGSKPLTPATVPGTRSPPLNRYNSTGSPPGKPPSTQDEHINSGDTPAVRVKDRKPPIGTRSVSDCPANGRSIHPGLETDSTKKGIGENTSSMKEMATLLTSLGVIQSAQEFESSRDASYVFARRALKSANYAEMTFNVCGLILSAEKSSARKVDENKQLLKQIQESVESFRDTYKRFSEYQKEQNSLLMSNLSTLHIITDRGGKTDNTDSLTRSPSVFAKSKENKTKATRFDPSMETLEDMKYKPDLIREDEFRDEIRNPVYQERDTEPRASNASRLLPSKEKPTMHSLRLVIESSPLSRAEKAAYVKSLSKCKTDQEVKAVMELVEEDIESLTN.

2 disordered regions span residues 1–23 (MDQD…GGRE) and 38–320 (SEPT…GIGE). Residues 7–20 (ILKEDSEVEREAPG) show a composition bias toward basic and acidic residues. The segment at 33–41 (DAVLSSEPT) is N0 binding. Over residues 50-59 (LHNTINTPQG) the composition is skewed to polar residues. Phosphoserine; by host is present on Ser68. Over residues 83–101 (RSGEESRVSGRTSKPEAEA) the composition is skewed to basic and acidic residues. Ser125 is modified (phosphoserine; by host). A compositionally biased stretch (basic and acidic residues) spans 150-168 (GIEDENREMAAHPDKRGED). Positions 191-206 (ASNNGRSMEPGSSHSA) are enriched in polar residues. Residues Ser192, Ser249, Ser257, and Ser260 each carry the phosphoserine; by host modification. The interval 344 to 411 (FESSRDASYV…SFRDTYKRFS (68 aa)) is multimerization. Residues 364–429 (YAEMTFNVCG…LLMSNLSTLH (66 aa)) are a coiled coil. The segment at 412 to 445 (EYQKEQNSLLMSNLSTLHIITDRGGKTDNTDSLT) is l protein binding. 2 positions are modified to phosphoserine; by host: Ser447 and Ser449. Residues 479 to 568 (DLIREDEFRD…VEEDIESLTN (90 aa)) are interaction with the nucleocapsid (N-RNA). The tract at residues 496 to 516 (QERDTEPRASNASRLLPSKEK) is disordered.

It belongs to the respirovirus P protein family. As to quaternary structure, homotetramer. Interacts (via multimerization domain) with polymerase L; this interaction forms the polymerase complex. Interacts (via N-terminus) with N0; this interaction allows P to chaperon N0 before encapsidation and form the N-P complex. Interacts (via C-terminus) with N-RNA template; this interaction positions the polymerase on the template. Post-translationally, phosphorylated by PKC/PRKCZ, and other unknown kinases. Phosphorylation is necessary for viral transcription and replication. The N-terminus contains the majority of phosphorylated sites. Ser-249 is the major site of phosphorylation, but is not necessary for most functions.

In terms of biological role, essential cofactor of the RNA polymerase L that plays a central role in the transcription and replication by forming the polymerase complex with RNA polymerase L and recruiting L to the genomic N-RNA template for RNA synthesis. Also plays a central role in the encapsidation of nascent RNA chains by forming the encapsidation complex with the nucleocapsid protein N (N-P complex). Acts as a chaperone for newly synthesized free N protein, so-called N0, allowing encapsidation of nascent RNA chains during replication. The nucleoprotein protein N prevents excessive phosphorylation of P, which leads to down-regulation of viral transcription/ replication. Participates, together with N, in the formation of viral factories (viroplasms), which are large inclusions in the host cytoplasm where replication takes place. Recruits host PI4KB and remodel the host endoplasmic reticulum membrane to form viral replication factories. The polypeptide is Phosphoprotein (P/V/C) (Sendai virus (strain Z) (SeV)).